A 436-amino-acid polypeptide reads, in one-letter code: MQKTAPRPPSARISFLSASVLGLGAAVASRGAVFLVNIMLAHSLTVHDFGLFSYAYVTALNLGLFLATGVSQAAGHVLPLTEDPERRRRQLCAFIVLLVALIAVAATALYLSATSISIAAFGSAQGGEALRMAAIVLIATAFTQALQAFLYAMHEHRASASVSIGAALLLLAMLWTMGPIRQPVVALVIFLAINAGAAASQLVILGRTTQNQRGPWRTGRQELRLAFKHALPSVLTTSMGAPVHWICLSMLAAMTDGAHQLALFSVAFQWYIAITFIPATLGNLALPFLARNTGATEAMVRQRFRSALLFGGGLSLALGCMAFLLAGQIFAWLYPAAYGSAAASMRSLAVAAALCGISVLLQQRIAAAGKFWRNFAMAAVYSVIYVAAAYLALRLGYGAPSIGLAMSAAYCCLILFQTLTLQSDSGAAIRLGRSFS.

12 helical membrane-spanning segments follow: residues 20–40 (VLGL…NIML), 49–69 (FGLF…LATG), 91–111 (LCAF…ALYL), 132–152 (MAAI…FLYA), 160–180 (ASVS…MGPI), 184–204 (VVAL…QLVI), 234–254 (VLTT…LAAM), 261–281 (LALF…PATL), 307–327 (ALLF…LLAG), 341–361 (AAAS…SVLL), 375–395 (FAMA…ALRL), and 396–416 (GYGA…LILF).

It to E.coli bicyclomycin resistance protein (BCR).

It localises to the cell inner membrane. Functionally, probably involved in polymerization and/or export of exopolysaccharide EPS I which functions as a virulence factor. May play a role in export of EPS I or its intermediates across the membranes. This chain is EPS I polysaccharide export inner membrane protein EpsE (epsE), found in Ralstonia nicotianae (strain ATCC BAA-1114 / GMI1000) (Ralstonia solanacearum).